Here is a 551-residue protein sequence, read N- to C-terminus: Transcription factor 7-like 1-B (551 aa).

A compositionally biased stretch (gly residues) spans 1–11 (MPQLNSGGGDE). Positions 1 to 61 (MPQLNSGGGD…SENHSSDSDS (61 aa)) are interaction with CTNNB1-A. 4 disordered regions span residues 1-77 (MPQL…EKPR), 183-213 (GTPP…PYYP), 391-474 (WSAR…SLTT), and 492-515 (SPSS…SRPI). Composition is skewed to basic and acidic residues over residues 17-32 (ELIR…EKSP) and 52-77 (SENH…EKPR). The interval 109-312 (LGGHYLPNGA…SPNLSTKSNV (204 aa)) is interaction with AES and TLE4-A. A DNA-binding region (HMG box) is located at residues 324-392 (IKKPLNAFML…LHSQLYPSWS (69 aa)). Over residues 407-416 (KQSPEMENYT) the composition is skewed to basic and acidic residues. Residues 408–551 (QSPEMENYTK…PLSLVTRSSD (144 aa)) form an interaction with CTBP-B region. Residues 445–464 (SPATPSAALASPAAPAATHS) are compositionally biased toward low complexity. Over residues 465-474 (EQAQPLSLTT) the composition is skewed to polar residues.

It belongs to the TCF/LEF family. In terms of assembly, interacts with csnk1e, ctnnb1-A, ctbp-B, dact1-A and gsk3b. May interact with ase and tle4-A. Interacts with tle1-B. Post-translationally, phosphorylated. Phosphorylation by csnk1e promotes binding to ctnnb1-A while phosphorylation by gsk3b may reverse this effect.

It localises to the nucleus. Functionally, participates in the Wnt signaling pathway. Binds to DNA and acts as a repressor in the absence of ctnnb1-A and possibly ctnnb1-B, and as an activator in the presence of these proteins. Required early in development for the establishment of the dorsal body axis in response to maternal Wnt signaling. This chain is Transcription factor 7-like 1-B (tcf7l1-b), found in Xenopus laevis (African clawed frog).